The primary structure comprises 310 residues: Zinc finger protein 346 (310 aa).

Met-1 bears the N-acetylmethionine mark. Positions 1-12 (MEYPAPAAVQAA) are enriched in low complexity. Residues 1–33 (MEYPAPAAVQAADGGGAGPYNSSELLEGQEPDG) are disordered. The Matrin-type 1 zinc finger occupies 70–104 (FTNTQCKVCCALLISESQKLAHYQSKKHANKVKRY). Residues Cys-75, Cys-78, His-91, and His-97 each coordinate Zn(2+). Lys-114 is covalently cross-linked (Glycyl lysine isopeptide (Lys-Gly) (interchain with G-Cter in SUMO2)). A Matrin-type 2 zinc finger spans residues 131 to 165 (DKNQCCPICNMTFSSPVVAQSHYLGKTHAKNLKLK). Residues Cys-136, Cys-139, His-152, and His-158 each contribute to the Zn(2+) site. Lys-170 is covalently cross-linked (Glycyl lysine isopeptide (Lys-Gly) (interchain with G-Cter in SUMO2)). 2 Matrin-type zinc fingers span residues 198 to 232 (DPDK…ETKL) and 252 to 286 (GKGY…SPKT). A disordered region spans residues 278 to 310 (KHKNQSPKTVASSLGQIPMQRQPIQKDSTTLED). Composition is skewed to polar residues over residues 283–292 (SPKTVASSLG) and 299–310 (QPIQKDSTTLED).

Forms a heteromeric complex with XPO5 and ILF3. Found in a nuclear export complex with XPO5, RAN, ILF3, ZNF346 and double-stranded RNA. Interacts with XPO5. Interacts with ILF3 in an RNA-independent manner.

It localises to the nucleus. The protein resides in the nucleolus. The protein localises to the cytoplasm. Functionally, binds with low affinity to dsDNA and ssRNA, and with high affinity to dsRNA, with no detectable sequence specificity. The protein is Zinc finger protein 346 (ZNF346) of Pongo abelii (Sumatran orangutan).